The chain runs to 325 residues: Lipoyl synthase (325 aa).

[4Fe-4S] cluster-binding residues include Cys-66, Cys-71, Cys-77, Cys-92, Cys-96, Cys-99, and Ser-303. A Radical SAM core domain is found at 78-292; sequence WEDREATFLI…AQFAEGLGFA (215 aa).

The protein belongs to the radical SAM superfamily. Lipoyl synthase family. [4Fe-4S] cluster serves as cofactor.

It is found in the cytoplasm. The enzyme catalyses [[Fe-S] cluster scaffold protein carrying a second [4Fe-4S](2+) cluster] + N(6)-octanoyl-L-lysyl-[protein] + 2 oxidized [2Fe-2S]-[ferredoxin] + 2 S-adenosyl-L-methionine + 4 H(+) = [[Fe-S] cluster scaffold protein] + N(6)-[(R)-dihydrolipoyl]-L-lysyl-[protein] + 4 Fe(3+) + 2 hydrogen sulfide + 2 5'-deoxyadenosine + 2 L-methionine + 2 reduced [2Fe-2S]-[ferredoxin]. Its pathway is protein modification; protein lipoylation via endogenous pathway; protein N(6)-(lipoyl)lysine from octanoyl-[acyl-carrier-protein]: step 2/2. Catalyzes the radical-mediated insertion of two sulfur atoms into the C-6 and C-8 positions of the octanoyl moiety bound to the lipoyl domains of lipoate-dependent enzymes, thereby converting the octanoylated domains into lipoylated derivatives. The polypeptide is Lipoyl synthase (Mycobacterium sp. (strain JLS)).